A 293-amino-acid polypeptide reads, in one-letter code: ATP synthase gamma chain (293 aa).

The protein belongs to the ATPase gamma chain family. F-type ATPases have 2 components, CF(1) - the catalytic core - and CF(0) - the membrane proton channel. CF(1) has five subunits: alpha(3), beta(3), gamma(1), delta(1), epsilon(1). CF(0) has three main subunits: a, b and c.

The protein localises to the cell inner membrane. Functionally, produces ATP from ADP in the presence of a proton gradient across the membrane. The gamma chain is believed to be important in regulating ATPase activity and the flow of protons through the CF(0) complex. The protein is ATP synthase gamma chain of Psychrobacter sp. (strain PRwf-1).